Consider the following 83-residue polypeptide: Cytochrome b559 subunit alpha (83 aa).

A helical transmembrane segment spans residues 21-35; the sequence is VIHSITIPSLFIAGW. His-23 contributes to the heme binding site.

The protein belongs to the PsbE/PsbF family. In terms of assembly, heterodimer of an alpha subunit and a beta subunit. PSII is composed of 1 copy each of membrane proteins PsbA, PsbB, PsbC, PsbD, PsbE, PsbF, PsbH, PsbI, PsbJ, PsbK, PsbL, PsbM, PsbT, PsbX, PsbY, PsbZ, Psb30/Ycf12, at least 3 peripheral proteins of the oxygen-evolving complex and a large number of cofactors. It forms dimeric complexes. It depends on heme b as a cofactor.

It localises to the plastid. It is found in the chloroplast thylakoid membrane. This b-type cytochrome is tightly associated with the reaction center of photosystem II (PSII). PSII is a light-driven water:plastoquinone oxidoreductase that uses light energy to abstract electrons from H(2)O, generating O(2) and a proton gradient subsequently used for ATP formation. It consists of a core antenna complex that captures photons, and an electron transfer chain that converts photonic excitation into a charge separation. This Staurastrum punctulatum (Green alga) protein is Cytochrome b559 subunit alpha.